The sequence spans 126 residues: uncharacterized protein (126 aa).

The Extracellular segment spans residues 1-9; that stretch reads MCTYIITQS. Residues 10-30 form a helical membrane-spanning segment; it reads FFFLPCLSFLFFKLVGFFDSV. At 31-73 the chain is on the cytoplasmic side; the sequence is FTAGKSLRIMFELPIFDKLTSCFAAIDCSATSLDIPFAEEELF. Residues 74–94 traverse the membrane as a helical segment; that stretch reads LMLVSEPVLIPFLFVFEFMLI. Residues 95 to 126 are Extracellular-facing; it reads CKPCGSRSRFGFPVKNVSDFEETLEFDPTLLV.

The protein localises to the membrane. This is an uncharacterized protein from Saccharomyces cerevisiae (strain ATCC 204508 / S288c) (Baker's yeast).